A 486-amino-acid polypeptide reads, in one-letter code: Galactose-1-phosphate uridylyltransferase (486 aa).

Belongs to the galactose-1-phosphate uridylyltransferase type 2 family.

It localises to the cytoplasm. It carries out the reaction alpha-D-galactose 1-phosphate + UDP-alpha-D-glucose = alpha-D-glucose 1-phosphate + UDP-alpha-D-galactose. The protein operates within carbohydrate metabolism; galactose metabolism. This is Galactose-1-phosphate uridylyltransferase from Pediococcus pentosaceus (strain ATCC 25745 / CCUG 21536 / LMG 10740 / 183-1w).